The following is a 274-amino-acid chain: Exosome complex component RRP40 (274 aa).

Ala-2 carries the post-translational modification N-acetylalanine. A Glycyl lysine isopeptide (Lys-Gly) (interchain with G-Cter in SUMO2) cross-link involves residue Lys-150.

This sequence belongs to the RRP40 family. Component of the RNA exosome core complex (Exo-9), composed of EXOSC1, EXOSC2, EXOSC3, EXOSC4, EXOSC5, EXOSC6, EXOSC7, EXOSC8 and EXOSC9; within the complex interacts with EXOSC5 and EXOSC9. The catalytically inactive RNA exosome core complex (Exo-9) associates with the catalytic subunit EXOSC10/RRP6. Exo-9 may associate with DIS3 to form the nucleolar exosome complex, or DIS3L to form the cytoplasmic exosome complex. Exo-9 is formed by a hexameric base ring consisting of the heterodimers EXOSC4-EXOSC9, EXOSC5-EXOSC8 and EXOSC6-EXOSC7, and a cap ring consisting of EXOSC1, EXOSC2 and EXOSC3. The RNA exosome complex associates with cofactors C1D/RRP47, MPHOSPH6/MPP6 and MTREX/MTR4. Interacts with MPHOSPH6/MPP6; the interaction is direct. Interacts with GTPBP1. Interacts with ZC3HAV1. Interacts with DDX17 only in the presence of ZC3HAV1 in an RNA-independent manner. Interacts with DHX36; this interaction occurs in a RNase-insensitive manner. Interacts with HBS1L isoform 2.

It is found in the cytoplasm. The protein resides in the nucleus. The protein localises to the nucleolus. Its function is as follows. Non-catalytic component of the RNA exosome complex which has 3'-&gt;5' exoribonuclease activity and participates in a multitude of cellular RNA processing and degradation events. In the nucleus, the RNA exosome complex is involved in proper maturation of stable RNA species such as rRNA, snRNA and snoRNA, in the elimination of RNA processing by-products and non-coding 'pervasive' transcripts, such as antisense RNA species and promoter-upstream transcripts (PROMPTs), and of mRNAs with processing defects, thereby limiting or excluding their export to the cytoplasm. The RNA exosome may be involved in Ig class switch recombination (CSR) and/or Ig variable region somatic hypermutation (SHM) by targeting AICDA deamination activity to transcribed dsDNA substrates. In the cytoplasm, the RNA exosome complex is involved in general mRNA turnover and specifically degrades inherently unstable mRNAs containing AU-rich elements (AREs) within their 3' untranslated regions, and in RNA surveillance pathways, preventing translation of aberrant mRNAs. It seems to be involved in degradation of histone mRNA. The catalytic inactive RNA exosome core complex of 9 subunits (Exo-9) is proposed to play a pivotal role in the binding and presentation of RNA for ribonucleolysis, and to serve as a scaffold for the association with catalytic subunits and accessory proteins or complexes. EXOSC3 as peripheral part of the Exo-9 complex stabilizes the hexameric ring of RNase PH-domain subunits through contacts with EXOSC9 and EXOSC5. The chain is Exosome complex component RRP40 (Exosc3) from Mus musculus (Mouse).